The sequence spans 349 residues: Heparin sulfate O-sulfotransferase (349 aa).

At 1-17 (MFRKLLKMWILLRPTHW) the chain is on the cytoplasmic side. The helical; Signal-anchor for type II membrane protein transmembrane segment at 18 to 38 (LILIALCAVTCAGYWLLWSEI) threads the bilayer. Topologically, residues 39 to 349 (RLEHAFKPLS…KFMYEKIRPK (311 aa)) are lumenal. Residues Asn107 and Asn126 are each glycosylated (N-linked (GlcNAc...) asparagine). Catalysis depends on residues His139 and His141. 2 disulfides stabilise this stretch: Cys200–Cys208 and Cys221–Cys227. Asn282 is a glycosylation site (N-linked (GlcNAc...) asparagine).

It belongs to the sulfotransferase 3 family. As to quaternary structure, homotrimer.

It localises to the golgi apparatus membrane. Catalyzes the transfer of sulfate to the C2-position of selected hexuronic acid residues within the maturing heparan sulfate (HS). The chain is Heparin sulfate O-sulfotransferase from Drosophila melanogaster (Fruit fly).